The sequence spans 165 residues: Phosphopantetheine adenylyltransferase (165 aa).

S10 serves as a coordination point for substrate. ATP-binding positions include 10-11 (SF) and H18. The substrate site is built by K42, T79, and R93. ATP-binding positions include 94–96 (GLR), E104, and 129–135 (VRPITAT).

This sequence belongs to the bacterial CoaD family. In terms of assembly, homohexamer. Requires Mg(2+) as cofactor.

The protein resides in the cytoplasm. The enzyme catalyses (R)-4'-phosphopantetheine + ATP + H(+) = 3'-dephospho-CoA + diphosphate. It functions in the pathway cofactor biosynthesis; coenzyme A biosynthesis; CoA from (R)-pantothenate: step 4/5. Its function is as follows. Reversibly transfers an adenylyl group from ATP to 4'-phosphopantetheine, yielding dephospho-CoA (dPCoA) and pyrophosphate. The sequence is that of Phosphopantetheine adenylyltransferase from Rhodopseudomonas palustris (strain HaA2).